The primary structure comprises 529 residues: BTB/POZ domain-containing protein 6 (529 aa).

The BTB domain occupies 127–197 (ADVHFIVGPA…LYSDEIDLEA (71 aa)).

In terms of assembly, homodimer and heterodimer. Interacts with cul3 via the BTB domain.

The protein resides in the cytoplasm. Adapter protein for the cul3 E3 ubiquitin-protein ligase complex. Involved in late neuronal development and muscle formation. The chain is BTB/POZ domain-containing protein 6 (btbd6) from Xenopus laevis (African clawed frog).